A 147-amino-acid polypeptide reads, in one-letter code: Large-conductance mechanosensitive channel (147 aa).

Helical transmembrane passes span 8–28 and 81–101; these read FIMK…AAFG and GIFL…FMII.

This sequence belongs to the MscL family. In terms of assembly, homopentamer.

The protein resides in the cell inner membrane. Functionally, channel that opens in response to stretch forces in the membrane lipid bilayer. May participate in the regulation of osmotic pressure changes within the cell. The polypeptide is Large-conductance mechanosensitive channel (Trichlorobacter lovleyi (strain ATCC BAA-1151 / DSM 17278 / SZ) (Geobacter lovleyi)).